The following is a 158-amino-acid chain: Transcription elongation factor GreA (158 aa).

It belongs to the GreA/GreB family.

Necessary for efficient RNA polymerase transcription elongation past template-encoded arresting sites. The arresting sites in DNA have the property of trapping a certain fraction of elongating RNA polymerases that pass through, resulting in locked ternary complexes. Cleavage of the nascent transcript by cleavage factors such as GreA or GreB allows the resumption of elongation from the new 3'terminus. GreA releases sequences of 2 to 3 nucleotides. The sequence is that of Transcription elongation factor GreA from Pelagibacter ubique (strain HTCC1062).